A 217-amino-acid polypeptide reads, in one-letter code: GTP cyclohydrolase 1 (217 aa).

Positions 109, 112, and 180 each coordinate Zn(2+).

Belongs to the GTP cyclohydrolase I family. In terms of assembly, toroid-shaped homodecamer, composed of two pentamers of five dimers.

It catalyses the reaction GTP + H2O = 7,8-dihydroneopterin 3'-triphosphate + formate + H(+). Its pathway is cofactor biosynthesis; 7,8-dihydroneopterin triphosphate biosynthesis; 7,8-dihydroneopterin triphosphate from GTP: step 1/1. The protein is GTP cyclohydrolase 1 of Photobacterium profundum (strain SS9).